Consider the following 334-residue polypeptide: Glycerol-3-phosphate dehydrogenase [NAD(P)+] (334 aa).

4 residues coordinate NADPH: S11, W12, R32, and K106. K106 and G136 together coordinate sn-glycerol 3-phosphate. Residue A140 coordinates NADPH. Sn-glycerol 3-phosphate contacts are provided by K191, D244, S254, R255, and N256. The Proton acceptor role is filled by K191. R255 is a binding site for NADPH. NADPH is bound by residues V279 and E281.

It belongs to the NAD-dependent glycerol-3-phosphate dehydrogenase family.

It localises to the cytoplasm. It catalyses the reaction sn-glycerol 3-phosphate + NAD(+) = dihydroxyacetone phosphate + NADH + H(+). It carries out the reaction sn-glycerol 3-phosphate + NADP(+) = dihydroxyacetone phosphate + NADPH + H(+). It participates in membrane lipid metabolism; glycerophospholipid metabolism. In terms of biological role, catalyzes the reduction of the glycolytic intermediate dihydroxyacetone phosphate (DHAP) to sn-glycerol 3-phosphate (G3P), the key precursor for phospholipid synthesis. The sequence is that of Glycerol-3-phosphate dehydrogenase [NAD(P)+] from Parafrankia sp. (strain EAN1pec).